We begin with the raw amino-acid sequence, 165 residues long: 16S rRNA aminocarboxypropyltransferase (165 aa).

S-adenosyl-L-methionine-binding residues include Thr17, Leu62, Leu83, and Thr102.

It belongs to the TDD superfamily. TSR3 family.

The protein resides in the cytoplasm. The catalysed reaction is an N(1)-methylpseudouridine in rRNA + S-adenosyl-L-methionine = N(1)-methyl-N(3)-[(3S)-3-amino-3-carboxypropyl]pseudouridine in rRNA + S-methyl-5'-thioadenosine + H(+). In terms of biological role, aminocarboxypropyltransferase that catalyzes the aminocarboxypropyl transfer on pseudouridine corresponding to position 914 in M.jannaschii 16S rRNA. It constitutes the last step in biosynthesis of the hypermodified N1-methyl-N3-(3-amino-3-carboxypropyl) pseudouridine (m1acp3-Psi). The protein is 16S rRNA aminocarboxypropyltransferase of Halobacterium salinarum (strain ATCC 700922 / JCM 11081 / NRC-1) (Halobacterium halobium).